Reading from the N-terminus, the 134-residue chain is MQALLLVLVLFIVQIYLLPGNGISLESLAVDKRCKCVKVTNRPTGLGPIIAVDVIPPGIHCRRTEIIFALKKNRKVCVDPEAPWVQQFIKKLERQHRTRKENLMVGEDGGKSTVGPVKNTIEPTPPTIGSHICL.

Residues 1–22 form the signal peptide; it reads MQALLLVLVLFIVQIYLLPGNG.

Belongs to the intercrine alpha (chemokine CxC) family. In terms of assembly, homodimer.

It localises to the secreted. Plays a role in the early phase of cytolytic infections presumably by recruiting host B or T-lymphocytes. The sequence is that of Viral interleukin-8 homolog (MDV078) from Gallus gallus (Chicken).